A 293-amino-acid polypeptide reads, in one-letter code: MAMVVFLLLYLCGHPQAAADNIQTLYVPSGESMEMPCPSPPSLLGGQLLTWFRSPVSGSSTILVAQVQVDRPISDLGKADPDSRFKVLGNYSLRLEGSRDEDAGRYWCTVMDQNHKYQNWRVYDVSVLKGSQFSVKSPDGLSCSALLCSVVPARRLDSVTWLEGRNPVRGHAQYFWGEGAALLLVCPTEGVPETRSRRPRNIRCLMPQNKRFSFSVAAPAEPPPTVCAPLPSWDVSWILMLLFAAGQGVTIIALSIVIWRHQRAQGTQDREPSIPHFKPEVQVYENIHLARLR.

A signal peptide spans 1–19 (MAMVVFLLLYLCGHPQAAA). Positions 20 to 124 (DNIQTLYVPS…HKYQNWRVYD (105 aa)) constitute an Ig-like V-type domain. Residues 20-237 (DNIQTLYVPS…APLPSWDVSW (218 aa)) lie on the Extracellular side of the membrane. An intrachain disulfide couples cysteine 37 to cysteine 108. The N-linked (GlcNAc...) asparagine glycan is linked to asparagine 90. Residues 238–258 (ILMLLFAAGQGVTIIALSIVI) traverse the membrane as a helical segment. The Cytoplasmic portion of the chain corresponds to 259–293 (WRHQRAQGTQDREPSIPHFKPEVQVYENIHLARLR). Tyrosine 284 is modified (phosphotyrosine).

As to quaternary structure, homodimer; disulfide-linked. Interacts with GRB2 and GRB7 in a phosphorylation-dependent manner. N-glycosylated.

The protein localises to the cell membrane. May play a role in the downstream signal transduction pathways involving GRB2 and GRB7. The chain is Lymphocyte antigen 6 complex locus protein G6f (Ly6g6f) from Rattus norvegicus (Rat).